Consider the following 588-residue polypeptide: Adenine deaminase (588 aa).

This sequence belongs to the metallo-dependent hydrolases superfamily. Adenine deaminase family. Homodimer. Mn(2+) serves as cofactor.

It carries out the reaction adenine + H2O + H(+) = hypoxanthine + NH4(+). This Shigella boydii serotype 4 (strain Sb227) protein is Adenine deaminase.